A 136-amino-acid chain; its full sequence is Large ribosomal subunit protein uL22 (136 aa).

It belongs to the universal ribosomal protein uL22 family. Part of the 50S ribosomal subunit.

In terms of biological role, this protein binds specifically to 23S rRNA; its binding is stimulated by other ribosomal proteins, e.g. L4, L17, and L20. It is important during the early stages of 50S assembly. It makes multiple contacts with different domains of the 23S rRNA in the assembled 50S subunit and ribosome. Its function is as follows. The globular domain of the protein is located near the polypeptide exit tunnel on the outside of the subunit, while an extended beta-hairpin is found that lines the wall of the exit tunnel in the center of the 70S ribosome. The sequence is that of Large ribosomal subunit protein uL22 from Bacteroides thetaiotaomicron (strain ATCC 29148 / DSM 2079 / JCM 5827 / CCUG 10774 / NCTC 10582 / VPI-5482 / E50).